We begin with the raw amino-acid sequence, 337 residues long: Ketol-acid reductoisomerase (NADP(+)) (337 aa).

Residues 3–183 (VEMFYDDDAD…GGTRAGVIKT (181 aa)) enclose the KARI N-terminal Rossmann domain. NADP(+)-binding positions include 26–29 (YGSQ), lysine 49, serine 52, serine 54, and 84–87 (DTAQ). Residue histidine 109 is part of the active site. Glycine 135 is an NADP(+) binding site. In terms of domain architecture, KARI C-terminal knotted spans 184–329 (TFKEETETDL…KKLRDLMSWV (146 aa)). 4 residues coordinate Mg(2+): aspartate 192, glutamate 196, glutamate 228, and glutamate 232. Serine 253 is a binding site for substrate.

This sequence belongs to the ketol-acid reductoisomerase family. It depends on Mg(2+) as a cofactor.

It carries out the reaction (2R)-2,3-dihydroxy-3-methylbutanoate + NADP(+) = (2S)-2-acetolactate + NADPH + H(+). The catalysed reaction is (2R,3R)-2,3-dihydroxy-3-methylpentanoate + NADP(+) = (S)-2-ethyl-2-hydroxy-3-oxobutanoate + NADPH + H(+). It functions in the pathway amino-acid biosynthesis; L-isoleucine biosynthesis; L-isoleucine from 2-oxobutanoate: step 2/4. It participates in amino-acid biosynthesis; L-valine biosynthesis; L-valine from pyruvate: step 2/4. Its function is as follows. Involved in the biosynthesis of branched-chain amino acids (BCAA). Catalyzes an alkyl-migration followed by a ketol-acid reduction of (S)-2-acetolactate (S2AL) to yield (R)-2,3-dihydroxy-isovalerate. In the isomerase reaction, S2AL is rearranged via a Mg-dependent methyl migration to produce 3-hydroxy-3-methyl-2-ketobutyrate (HMKB). In the reductase reaction, this 2-ketoacid undergoes a metal-dependent reduction by NADPH to yield (R)-2,3-dihydroxy-isovalerate. The sequence is that of Ketol-acid reductoisomerase (NADP(+)) from Rhodococcus erythropolis (strain PR4 / NBRC 100887).